The sequence spans 134 residues: Large ribosomal subunit protein bL17 (134 aa).

It belongs to the bacterial ribosomal protein bL17 family. As to quaternary structure, part of the 50S ribosomal subunit. Contacts protein L32.

The sequence is that of Large ribosomal subunit protein bL17 from Aromatoleum aromaticum (strain DSM 19018 / LMG 30748 / EbN1) (Azoarcus sp. (strain EbN1)).